The chain runs to 335 residues: Pyridoxal 5'-phosphate synthase subunit PdxS (335 aa).

Residue D30 coordinates D-ribose 5-phosphate. K87 serves as the catalytic Schiff-base intermediate with D-ribose 5-phosphate. Residue G159 coordinates D-ribose 5-phosphate. R171 provides a ligand contact to D-glyceraldehyde 3-phosphate. D-ribose 5-phosphate is bound by residues G257 and 278–279 (GS).

The protein belongs to the PdxS/SNZ family. In terms of assembly, in the presence of PdxT, forms a dodecamer of heterodimers.

The enzyme catalyses aldehydo-D-ribose 5-phosphate + D-glyceraldehyde 3-phosphate + L-glutamine = pyridoxal 5'-phosphate + L-glutamate + phosphate + 3 H2O + H(+). It participates in cofactor biosynthesis; pyridoxal 5'-phosphate biosynthesis. In terms of biological role, catalyzes the formation of pyridoxal 5'-phosphate from ribose 5-phosphate (RBP), glyceraldehyde 3-phosphate (G3P) and ammonia. The ammonia is provided by the PdxT subunit. Can also use ribulose 5-phosphate and dihydroxyacetone phosphate as substrates, resulting from enzyme-catalyzed isomerization of RBP and G3P, respectively. This is Pyridoxal 5'-phosphate synthase subunit PdxS from Thermococcus kodakarensis (strain ATCC BAA-918 / JCM 12380 / KOD1) (Pyrococcus kodakaraensis (strain KOD1)).